A 318-amino-acid chain; its full sequence is Aspartate carbamoyltransferase catalytic subunit (318 aa).

Residues Arg-64 and Thr-65 each contribute to the carbamoyl phosphate site. Residue Lys-92 coordinates L-aspartate. 3 residues coordinate carbamoyl phosphate: Arg-114, His-142, and Gln-145. 2 residues coordinate L-aspartate: Arg-175 and Arg-229. Carbamoyl phosphate-binding residues include Gly-270 and Pro-271.

The protein belongs to the aspartate/ornithine carbamoyltransferase superfamily. ATCase family. As to quaternary structure, heterododecamer (2C3:3R2) of six catalytic PyrB chains organized as two trimers (C3), and six regulatory PyrI chains organized as three dimers (R2).

It carries out the reaction carbamoyl phosphate + L-aspartate = N-carbamoyl-L-aspartate + phosphate + H(+). It participates in pyrimidine metabolism; UMP biosynthesis via de novo pathway; (S)-dihydroorotate from bicarbonate: step 2/3. Catalyzes the condensation of carbamoyl phosphate and aspartate to form carbamoyl aspartate and inorganic phosphate, the committed step in the de novo pyrimidine nucleotide biosynthesis pathway. The polypeptide is Aspartate carbamoyltransferase catalytic subunit (Rhodospirillum centenum (strain ATCC 51521 / SW)).